Here is a 201-residue protein sequence, read N- to C-terminus: MKVVAFERQQQGTGASRRLRNAGKTTGIVYGGEAAPQKIELDHNALWHALKKEAFHSSILDLEVAGQSQQVLLRDVQYHPFKQLVLHVDFQRVDAKKKLHTKAPLHFLNAEVSPAVKLSSAIVSHVATEIEIECLPADLPEFLEVDLSKIEAGQSLHAKDIALPKGVALVAHVDAENPVIASATVPAGAVSDAAEGETPAA.

The protein belongs to the bacterial ribosomal protein bL25 family. CTC subfamily. In terms of assembly, part of the 50S ribosomal subunit; part of the 5S rRNA/L5/L18/L25 subcomplex. Contacts the 5S rRNA. Binds to the 5S rRNA independently of L5 and L18.

This is one of the proteins that binds to the 5S RNA in the ribosome where it forms part of the central protuberance. The chain is Large ribosomal subunit protein bL25 from Burkholderia cenocepacia (strain HI2424).